We begin with the raw amino-acid sequence, 244 residues long: Type III pantothenate kinase (244 aa).

ATP is bound at residue 7 to 14 (DIGNTRLK). Substrate is bound by residues Tyr-95 and 102–105 (GIDR). Asp-104 (proton acceptor) is an active-site residue. Thr-126 is an ATP binding site. Thr-177 contacts substrate.

This sequence belongs to the type III pantothenate kinase family. Homodimer. NH4(+) serves as cofactor. The cofactor is K(+).

It is found in the cytoplasm. The catalysed reaction is (R)-pantothenate + ATP = (R)-4'-phosphopantothenate + ADP + H(+). It functions in the pathway cofactor biosynthesis; coenzyme A biosynthesis; CoA from (R)-pantothenate: step 1/5. Functionally, catalyzes the phosphorylation of pantothenate (Pan), the first step in CoA biosynthesis. This Acinetobacter baumannii (strain ACICU) protein is Type III pantothenate kinase.